We begin with the raw amino-acid sequence, 429 residues long: Acetylornithine aminotransferase (429 aa).

Pyridoxal 5'-phosphate is bound by residues Gly126–Ala127 and Phe160. Arg163 is a N(2)-acetyl-L-ornithine binding site. Asp251–Gln254 provides a ligand contact to pyridoxal 5'-phosphate. At Lys280 the chain carries N6-(pyridoxal phosphate)lysine. N(2)-acetyl-L-ornithine is bound at residue Ser307. A pyridoxal 5'-phosphate-binding site is contributed by Thr308.

It belongs to the class-III pyridoxal-phosphate-dependent aminotransferase family. ArgD subfamily. As to quaternary structure, homodimer. Requires pyridoxal 5'-phosphate as cofactor.

The protein localises to the cytoplasm. It catalyses the reaction N(2)-acetyl-L-ornithine + 2-oxoglutarate = N-acetyl-L-glutamate 5-semialdehyde + L-glutamate. The protein operates within amino-acid biosynthesis; L-arginine biosynthesis; N(2)-acetyl-L-ornithine from L-glutamate: step 4/4. N-acetylornithine aminotransferase activity is stimulated by the addition of Mg(2+), Ca(2+) or Mn(2+), and inhibited by the addition of Zn(2+), Cu(2+), Co(2+) or Ni(2+). Functionally, catalyzes the reversible conversion of N-acetylornithine to N-acetylglutamate-5-semialdehyde. In vitro, also shows very low ornithine aminotransferase (OAT) and gamma-aminobutyrate aminotransferase (GABA-AT) activity, catalyzing the conversion of ornithine (Orn) to glutamate-5-semialdehyde and of gamma-aminobutyric acid (GABA) to succinate semialdehyde. It has been shown to function as a GABA-AT and contributes to closing the tricarboxylic acid cycle of Synechocystis sp. PCC6803 via the GABA shunt. However, the catalytic efficiency toward N-acetylornithine is 2500-fold and 10700-fold higher than that toward ornithine and gamma-aminobutyrate, respectively, indicating that the protein mainly functions as an N-acetylornithine aminotransferase. This is Acetylornithine aminotransferase from Synechocystis sp. (strain ATCC 27184 / PCC 6803 / Kazusa).